The chain runs to 172 residues: Keratin, high-sulfur matrix protein, B2A (172 aa).

N-acetylalanine is present on Ala2. 5 repeats span residues 27 to 36 (PTCCQTSCCQ), 37 to 46 (PTSIQTSCCQ), 47 to 56 (PISIQTSCCQ), 57 to 66 (PTSIQTSCCQ), and 67 to 76 (PTCLQTSGCE).

Functionally, the keratin products of mammalian epidermal derivatives such as wool and hair consist of microfibrils embedded in a rigid matrix of other proteins. The matrix proteins include the high-sulfur and high-tyrosine keratins, having molecular weights of 6-20 kDa, whereas the microfibrils contain the larger, low-sulfur keratins (40-56 kDa). This is Keratin, high-sulfur matrix protein, B2A from Ovis aries (Sheep).